The chain runs to 185 residues: 3-hydroxyanthranilate 3,4-dioxygenase (185 aa).

R44 is an O2 binding site. Residues H48, E54, and H95 each contribute to the Fe cation site. E54 serves as a coordination point for substrate. Substrate is bound by residues R99 and E109. 4 residues coordinate a divalent metal cation: C124, C127, C161, and C164.

Belongs to the 3-HAO family. Requires Fe(2+) as cofactor.

The protein localises to the cytoplasm. The catalysed reaction is 3-hydroxyanthranilate + O2 = (2Z,4Z)-2-amino-3-carboxymuconate 6-semialdehyde. The protein operates within cofactor biosynthesis; NAD(+) biosynthesis; quinolinate from L-kynurenine: step 3/3. Functionally, catalyzes the oxidative ring opening of 3-hydroxyanthranilate to 2-amino-3-carboxymuconate semialdehyde, which spontaneously cyclizes to quinolinate. This is 3-hydroxyanthranilate 3,4-dioxygenase from Podospora anserina (strain S / ATCC MYA-4624 / DSM 980 / FGSC 10383) (Pleurage anserina).